We begin with the raw amino-acid sequence, 266 residues long: Glucosamine-6-phosphate deaminase (266 aa).

The Proton acceptor; for enolization step role is filled by Asp72. Catalysis depends on Asp141, which acts as the For ring-opening step. The active-site Proton acceptor; for ring-opening step is His143. The active-site For ring-opening step is Glu148.

It belongs to the glucosamine/galactosamine-6-phosphate isomerase family. NagB subfamily. Homohexamer; trimer of disulfide-linked dimers.

The enzyme catalyses alpha-D-glucosamine 6-phosphate + H2O = beta-D-fructose 6-phosphate + NH4(+). The protein operates within amino-sugar metabolism; N-acetylneuraminate degradation; D-fructose 6-phosphate from N-acetylneuraminate: step 5/5. With respect to regulation, allosterically activated by N-acetylglucosamine 6-phosphate (GlcNAc6P). Catalyzes the reversible isomerization-deamination of glucosamine 6-phosphate (GlcN6P) to form fructose 6-phosphate (Fru6P) and ammonium ion. This chain is Glucosamine-6-phosphate deaminase, found in Shigella boydii serotype 18 (strain CDC 3083-94 / BS512).